The sequence spans 300 residues: MAPVQLKNKESQTARIVGSASAGILELSLFHPVDTISKRLMSNHGKITSLTQLNTVIFRDAASAPLLQKATSLFPGLGYAACYKIVQRIYKYSGQPIVKDFLNENYRHTFDKTFGKGSGKAIMHATAGSIVGIGEIFLLPLDVLKIKRQTNPAAFKGRGVFRILADEKFALYRGWGWTAARNAPGSFALFGGNAFAKEYIFKLKDYSQATFFQNFFTSIAGASASLIVSAPLDVIKTRIQNKNFDNPQSGFTILKNMLKFEGPTSFFKGLTPKLLTTGPKLVFSFTMAQTLIPFFDKLLK.

Solcar repeat units follow at residues 10 to 101 (ESQT…VKDF), 119 to 199 (GKAI…AKEY), and 212 to 294 (FQNF…LIPF). 6 helical membrane passes run 16–36 (IVGS…VDTI), 70–86 (ATSL…YKIV), 121–141 (AIMH…LLPL), 178–198 (TAAR…FAKE), 215–235 (FFTS…LDVI), and 275–295 (LTTG…IPFF).

Belongs to the mitochondrial carrier (TC 2.A.29) family.

The protein localises to the mitochondrion inner membrane. This is an uncharacterized protein from Schizosaccharomyces pombe (strain 972 / ATCC 24843) (Fission yeast).